The sequence spans 259 residues: Global transcriptional regulator CodY (259 aa).

The GAF domain stretch occupies residues 1-155; it reads MTLLEKTRKI…GGTVVGMEIL (155 aa). The segment at residues 203–222 is a DNA-binding region (H-T-H motif); the sequence is ASKIADRVGITRSVIVNALR.

This sequence belongs to the CodY family.

It is found in the cytoplasm. Its function is as follows. DNA-binding global transcriptional regulator which is involved in the adaptive response to starvation and acts by directly or indirectly controlling the expression of numerous genes in response to nutrient availability. During rapid exponential growth, CodY is highly active and represses genes whose products allow adaptation to nutrient depletion. This chain is Global transcriptional regulator CodY, found in Listeria welshimeri serovar 6b (strain ATCC 35897 / DSM 20650 / CCUG 15529 / CIP 8149 / NCTC 11857 / SLCC 5334 / V8).